The primary structure comprises 210 residues: Thymidylate kinase (210 aa).

Glycine 10–serine 17 contributes to the ATP binding site.

The protein belongs to the thymidylate kinase family.

It carries out the reaction dTMP + ATP = dTDP + ADP. In terms of biological role, phosphorylation of dTMP to form dTDP in both de novo and salvage pathways of dTTP synthesis. The protein is Thymidylate kinase of Pseudomonas syringae pv. syringae (strain B728a).